A 216-amino-acid polypeptide reads, in one-letter code: Somatotropin (216 aa).

Residues 1–25 form the signal peptide; the sequence is MAPGSWFSPLFITVITLGLQWPQEA. Histidine 46 is a binding site for Zn(2+). Cysteine 78 and cysteine 189 are oxidised to a cystine. Glutamate 198 contacts Zn(2+). Residues cysteine 206 and cysteine 214 are joined by a disulfide bond.

It belongs to the somatotropin/prolactin family.

It localises to the secreted. Functionally, growth hormone plays an important role in growth control. The sequence is that of Somatotropin (GH) from Anas platyrhynchos (Mallard).